We begin with the raw amino-acid sequence, 105 residues long: Large ribosomal subunit protein uL24 (105 aa).

Belongs to the universal ribosomal protein uL24 family. Part of the 50S ribosomal subunit.

Functionally, one of two assembly initiator proteins, it binds directly to the 5'-end of the 23S rRNA, where it nucleates assembly of the 50S subunit. One of the proteins that surrounds the polypeptide exit tunnel on the outside of the subunit. This is Large ribosomal subunit protein uL24 from Azoarcus sp. (strain BH72).